The primary structure comprises 210 residues: Fimbriae Z protein (210 aa).

A Response regulatory domain is found at 5–121 (SVIIMDTHPI…DIFHAVQMIL (117 aa)). Asp-56 carries the post-translational modification 4-aspartylphosphate. An HTH luxR-type domain is found at 143–208 (NSSTVTVLSN…ELIDYAKLYE (66 aa)). The H-T-H motif DNA-binding region spans 167–186 (NKEIADKLLLSNKTVSAHKS).

It is found in the cytoplasm. This Escherichia coli O157:H7 protein is Fimbriae Z protein (fimZ).